Here is a 341-residue protein sequence, read N- to C-terminus: L-threonine 3-dehydrogenase (341 aa).

Residue Cys-38 participates in Zn(2+) binding. Active-site charge relay system residues include Thr-40 and His-43. His-63, Glu-64, Cys-93, Cys-96, Cys-99, and Cys-107 together coordinate Zn(2+). NAD(+) contacts are provided by residues Ile-175, Asp-195, Arg-200, 262 to 264, and 286 to 287; these read LGI and IY.

This sequence belongs to the zinc-containing alcohol dehydrogenase family. Homotetramer. It depends on Zn(2+) as a cofactor.

It is found in the cytoplasm. It catalyses the reaction L-threonine + NAD(+) = (2S)-2-amino-3-oxobutanoate + NADH + H(+). It participates in amino-acid degradation; L-threonine degradation via oxydo-reductase pathway; glycine from L-threonine: step 1/2. Catalyzes the NAD(+)-dependent oxidation of L-threonine to 2-amino-3-ketobutyrate. The sequence is that of L-threonine 3-dehydrogenase from Salmonella choleraesuis (strain SC-B67).